The sequence spans 71 residues: DNA-directed RNA polymerase subunit omega (71 aa).

It belongs to the RNA polymerase subunit omega family. In terms of assembly, the RNAP catalytic core consists of 2 alpha, 1 beta, 1 beta' and 1 omega subunit. When a sigma factor is associated with the core the holoenzyme is formed, which can initiate transcription.

The catalysed reaction is RNA(n) + a ribonucleoside 5'-triphosphate = RNA(n+1) + diphosphate. Functionally, promotes RNA polymerase assembly. Latches the N- and C-terminal regions of the beta' subunit thereby facilitating its interaction with the beta and alpha subunits. In Azoarcus sp. (strain BH72), this protein is DNA-directed RNA polymerase subunit omega.